A 402-amino-acid chain; its full sequence is Deoxyguanosinetriphosphate triphosphohydrolase-like protein (402 aa).

Residues 73-217 (RLTHTIEVAQ…AAIADDIAYN (145 aa)) enclose the HD domain.

It belongs to the dGTPase family. Type 2 subfamily.

In Brucella anthropi (strain ATCC 49188 / DSM 6882 / CCUG 24695 / JCM 21032 / LMG 3331 / NBRC 15819 / NCTC 12168 / Alc 37) (Ochrobactrum anthropi), this protein is Deoxyguanosinetriphosphate triphosphohydrolase-like protein.